The sequence spans 753 residues: 5-methyltetrahydropteroyltriglutamate--homocysteine methyltransferase (753 aa).

5-methyltetrahydropteroyltri-L-glutamate contacts are provided by residues 17-20 and K117; that span reads RELK. Residues 431 to 433 and E484 each bind L-homocysteine; that span reads IGS. Residues 431–433 and E484 contribute to the L-methionine site; that span reads IGS. 5-methyltetrahydropteroyltri-L-glutamate is bound by residues 515–516 and W561; that span reads RC. D599 is a binding site for L-homocysteine. D599 contacts L-methionine. Residue E605 coordinates 5-methyltetrahydropteroyltri-L-glutamate. Residues H641, C643, and E665 each coordinate Zn(2+). H694 serves as the catalytic Proton donor. C726 lines the Zn(2+) pocket.

This sequence belongs to the vitamin-B12 independent methionine synthase family. Zn(2+) is required as a cofactor.

The enzyme catalyses 5-methyltetrahydropteroyltri-L-glutamate + L-homocysteine = tetrahydropteroyltri-L-glutamate + L-methionine. It functions in the pathway amino-acid biosynthesis; L-methionine biosynthesis via de novo pathway; L-methionine from L-homocysteine (MetE route): step 1/1. Its function is as follows. Catalyzes the transfer of a methyl group from 5-methyltetrahydrofolate to homocysteine resulting in methionine formation. This is 5-methyltetrahydropteroyltriglutamate--homocysteine methyltransferase from Escherichia coli (strain SMS-3-5 / SECEC).